Here is a 332-residue protein sequence, read N- to C-terminus: Phenol 2-monooxygenase, oxygenase component MhpL (332 aa).

It belongs to the TmoE/XamoE family.

The catalysed reaction is phenol + NADH + O2 + H(+) = catechol + NAD(+) + H2O. The protein operates within aromatic compound metabolism; phenol degradation. Functionally, part of a multicomponent enzyme which catalyzes the degradation of phenol and some of its methylated derivatives. This is Phenol 2-monooxygenase, oxygenase component MhpL (mphL) from Acinetobacter pittii (strain PHEA-2).